A 410-amino-acid chain; its full sequence is Peptidase T (410 aa).

Residue His78 coordinates Zn(2+). The active site involves Asp80. Position 140 (Asp140) interacts with Zn(2+). Glu174 serves as the catalytic Proton acceptor. Zn(2+) contacts are provided by Glu175, Asp197, and His379.

It belongs to the peptidase M20B family. Zn(2+) serves as cofactor.

Its subcellular location is the cytoplasm. The catalysed reaction is Release of the N-terminal residue from a tripeptide.. Cleaves the N-terminal amino acid of tripeptides. The polypeptide is Peptidase T (Staphylococcus saprophyticus subsp. saprophyticus (strain ATCC 15305 / DSM 20229 / NCIMB 8711 / NCTC 7292 / S-41)).